The chain runs to 452 residues: MKVQPSVTCVASWGGIVHLEAFGDPVIVLRGAWAVPRVDCLIDTLRTPNASCMRKGTHLLVPCLEEEELALHRRRLDMSEALPCPGKETPTPGCRLGALYWACVHNDPTQLQAILDGGVSPEEATQVDSNGRTGLMVACYHGFQSVVALLSHCPFLDVNQQDKGGDTALMLAAQAGHVPLVSLLLNYYVGLDLERRDQRGLTALMKAAMRNRCADLTAVDPVRGKTALEWAVLTDSFDTVWRIRQLLRRPQVEQLSQHYKPEWPALSGLVAQAQAQAQVAPSLLERLQATLSLPFAPSPQEGGVLDHLVTATTSLASPFVTTACHTLCPDHPPSLGTRSKSVPELLGTAPPPPLVPQSPPGSPQRSPWVFVPYQSPQGILSKCLQWLQPRDSTSPRPQVPKILLSKASSSSHQCQPKPSPSGHQSLALPLWRYQELRIEKRKQEEEARMAQK.

4 ANK repeats span residues 94–123 (CRLG…SPEE), 130–160 (NGRT…DVNQ), 164–193 (GGDT…GLDL), and 223–257 (RGKT…QLSQ). Disordered regions lie at residues 335 to 369 (LGTR…SPWV) and 405 to 427 (SKAS…QSLA). A compositionally biased stretch (pro residues) spans 349–362 (APPPPLVPQSPPGS). Residues 406-424 (KASSSSHQCQPKPSPSGHQ) are compositionally biased toward polar residues.

The protein localises to the cytoplasm. Its subcellular location is the cytosol. It is found in the nucleus. In terms of biological role, acts as a transcriptional repressor for CRX-activated photoreceptor gene regulation. This chain is Photoreceptor ankyrin repeat protein, found in Homo sapiens (Human).